The sequence spans 257 residues: Nuclear receptor subfamily 0 group B member 2 (257 aa).

The 242-residue stretch at 16 to 257 (SRPAILYALL…GLLGDMLLLR (242 aa)) folds into the NR LBD domain. Symmetric dimethylarginine; by PRMT5 is present on Arg-57.

This sequence belongs to the nuclear hormone receptor family. NR0 subfamily. As to quaternary structure, interacts (via N-terminus) with NEUROD1 (via N-terminus and C-terminus). Interacts with ID2. Interacts with RORG, NFIL3, NR1D1 and BHLHE41. Heterodimer; efficient DNA binding requires dimerization with another bHLH protein. Interacts with RARA, RXRA, THRB, NR5A1, NR5A2, NR1I3, PPARA, PPARG and EID1. Interacts with HNF4A; the resulting heterodimer is transcriptionally inactive. Interacts with DDX3X; this interaction disrupts the interaction between HNF4 and NR0B2/SHP that forms inactive heterodimers and enhances the formation of active HNF4 homodimers. Post-translationally, arginine methylation by PRMT5 enhances repression activity of metabolic genes in liver in response to bile acid signaling, by increasing interaction with cofactors. In terms of tissue distribution, liver. Low levels of expression were detected in heart and pancreas.

It is found in the nucleus. It localises to the cytoplasm. In terms of biological role, transcriptional regulator that acts as a negative regulator of receptor-dependent signaling pathways. Specifically inhibits transactivation of the nuclear receptor with which it interacts. Inhibits transcriptional activity of NEUROD1 on E-box-containing promoter by interfering with the coactivation function of the p300/CBP-mediated transcription complex for NEUROD1. Essential component of the liver circadian clock which via its interaction with NR1D1 and RORG regulates NPAS2-mediated hepatic lipid metabolism. Regulates the circadian expression of cytochrome P450 (CYP) enzymes. Represses: NR5A2 and HNF4A to down-regulate CYP2C38, NFLI3 to up-regulate CYP2A5, BHLHE41/HNF1A axis to up-regulate CYP1A2, CYP2E1 and CYP3A11, and NR1D1 to up-regulate CYP2B10, CYP4A10 and CYP4A14. This is Nuclear receptor subfamily 0 group B member 2 (NR0B2) from Homo sapiens (Human).